Here is a 726-residue protein sequence, read N- to C-terminus: Pre-mRNA-splicing factor CLF1 (726 aa).

HAT repeat units lie at residues 55-87 (EFQA…WEAS), 89-121 (NEYE…MELK), 123-155 (RNIN…LEEL), 157-188 (LNVS…LEER), 190-221 (NELD…FEED), 223-262 (GQPD…METR), 264-298 (KEFE…FEKQ), 308-340 (TVLG…LEED), 352-386 (VEPM…LWLQ), 396-432 (KDYD…FEIR), 434-465 (LDVS…LEMR), 467-499 (REFD…VESA), 501-534 (EDFE…FEAG), 536-567 (GERE…MEIA), 585-626 (GDAD…EHGD), and 635-667 (DMLP…DDER). A disordered region spans residues 682–726 (AWAQQRAGQGEEGGLSYDLPSDSEDENEDGDEDGDGREEEGMDQD). Residues 702 to 726 (SDSEDENEDGDEDGDGREEEGMDQD) are compositionally biased toward acidic residues.

This sequence belongs to the crooked-neck family. Associated with the spliceosome.

The protein resides in the nucleus. Its function is as follows. Involved in pre-mRNA splicing and cell cycle progression. Required for the spliceosome assembly and initiation of the DNA replication. The sequence is that of Pre-mRNA-splicing factor CLF1 (CLF1) from Cryptococcus neoformans var. neoformans serotype D (strain B-3501A) (Filobasidiella neoformans).